We begin with the raw amino-acid sequence, 214 residues long: MVFRRFVEVGRVAYVSFGPHAGKLVAIVDVIDQNRALVDGPCTQVRRQAMPFKCMQLTDFILKFPHSARQKYVRKAWEKADINAKWAATRWAKKIEAREKKAKMTDFDRYKVMKARKMRNRLIKIEVKKLQKAALLKASPKKALAAKGAAAVAAAAAAKVPAKKITTEGKKAPAQKAPAQKAAGQKAAPPPKTQKGQKAPSQKAPAPKASGKKA.

At Lys-79 the chain carries N6-acetyllysine. Lys-85 carries the N6-acetyllysine; alternate modification. Lys-85 bears the N6-succinyllysine; alternate mark. Lys-124 participates in a covalent cross-link: Glycyl lysine isopeptide (Lys-Gly) (interchain with G-Cter in SUMO2). Position 139 is a phosphoserine (Ser-139). The tract at residues 161-214 is disordered; that stretch reads PAKKITTEGKKAPAQKAPAQKAAGQKAAPPPKTQKGQKAPSQKAPAPKASGKKA. Residues 170–174 form a 1-1; approximate repeat; it reads KKAPA. A 4 X 5 AA tandem repeats of Q-K-A-[APS]-X region spans residues 170–189; the sequence is KKAPAQKAPAQKAAGQKAAP. Positions 172–214 are enriched in low complexity; the sequence is APAQKAPAQKAAGQKAAPPPKTQKGQKAPSQKAPAPKASGKKA. 5 repeat units span residues 175–179, 180–184, 185–189, 192–194, and 195–197. The tract at residues 192–197 is 2 X 3 AA tandem repeats of K-G-Q; that stretch reads KTQKGQ. The residue at position 203 (Lys-203) is an N6-succinyllysine.

The protein belongs to the eukaryotic ribosomal protein eL14 family. Component of the large ribosomal subunit.

It localises to the cytoplasm. Functionally, component of the large ribosomal subunit. The ribosome is a large ribonucleoprotein complex responsible for the synthesis of proteins in the cell. The protein is Large ribosomal subunit protein eL14 (RPL14) of Bos taurus (Bovine).